Consider the following 346-residue polypeptide: Uroporphyrinogen decarboxylase (346 aa).

Residues 21-25 (RQAGR), Asp-71, Tyr-146, Ser-201, and His-316 contribute to the substrate site.

Belongs to the uroporphyrinogen decarboxylase family. In terms of assembly, homodimer.

It is found in the cytoplasm. The enzyme catalyses uroporphyrinogen III + 4 H(+) = coproporphyrinogen III + 4 CO2. The protein operates within porphyrin-containing compound metabolism; protoporphyrin-IX biosynthesis; coproporphyrinogen-III from 5-aminolevulinate: step 4/4. Functionally, catalyzes the decarboxylation of four acetate groups of uroporphyrinogen-III to yield coproporphyrinogen-III. This is Uroporphyrinogen decarboxylase from Rickettsia rickettsii (strain Iowa).